The chain runs to 172 residues: Trypsin inhibitor DE-3 (172 aa).

2 disulfides stabilise this stretch: C39–C83 and C132–C139.

It belongs to the protease inhibitor I3 (leguminous Kunitz-type inhibitor) family.

Functionally, inhibition of trypsin. The sequence is that of Trypsin inhibitor DE-3 from Erythrina latissima (Broad-leaved coral tree).